Here is a 505-residue protein sequence, read N- to C-terminus: L-carnitine/gamma-butyrobetaine antiporter (505 aa).

The next 12 membrane-spanning stretches (helical) occupy residues 10 to 30, 51 to 71, 92 to 112, 143 to 163, 195 to 215, 231 to 251, 263 to 283, 316 to 336, 347 to 367, 403 to 423, 446 to 466, and 475 to 495; these read IEPK…WLTV, WGWA…WLVF, IFMM…SIEI, GPLP…FFFV, FYLV…TPLV, LDAI…ACGL, SYLS…SFIM, WTVF…IFLA, LCFG…TVLG, LSTA…VTLI, LLVR…LLAL, and AIIA…LSFI.

Belongs to the BCCT transporter (TC 2.A.15) family. CaiT subfamily. As to quaternary structure, homotrimer.

It localises to the cell inner membrane. The enzyme catalyses 4-(trimethylamino)butanoate(in) + (R)-carnitine(out) = 4-(trimethylamino)butanoate(out) + (R)-carnitine(in). It functions in the pathway amine and polyamine metabolism; carnitine metabolism. In terms of biological role, catalyzes the exchange of L-carnitine for gamma-butyrobetaine. The protein is L-carnitine/gamma-butyrobetaine antiporter of Salmonella typhi.